The following is a 691-amino-acid chain: MARSPVEPPASQPAKRAAWLRAELERANYAYYVLDQPDLPDAEYDRLFVELQRIEAEHPDLVTPDSPTQRVGGEAASGFTPVVHDKPMLSLNNGFADEDVIAFDKRVADGLDKATDLAGTVTEPVEYACELKFDGLAISLRYENGRFVQASTRGDGTTGEDVTENIRTIRAIPLTLKGKRIPRMLDVRGEVLMFKRDFARLNERQRAAGQREFANPRNAAAGSLRQLDSKITASRPLSFFAYGIGVLDGADMPDTHSGLLDWYETLGLPVNRERAVVRGAAGLLAFFHSVGERRESLPYDIDGVVYKVNRRDEQDRLGFVSRAPRFALAHKFPAQEALTKLIAIDVQVGRTGAITPVARLEPVFVGGATVTNATLHNEDEVRRKDIRIGDTVIVRRAGDVIPEVVSAVLDRRPADAQEFVMPTECPECGSRIERLPDEAIARCTGGLFCPAQRKQALWHFAQRRALDIDGLGEKIIDQLVEQNLVRTPADLFNLGFSTLVGLDRFAEKSARNLIDSLEKAKHTTLARFIYALGIRHVGESTAKDLAKHFGSLDPIMDAPIDALLEVNDVGPIVAESIHQFFAEEHNRTVIEQLRARGKVTWPEGPPAPRAPQGVLAGKTVVLTGTLPTLTREAAKEMLEAAGAKVAGSVSKKTDYVVAGADAGSKLAKAEELGIPVLDEAGMHTLLEGHAR.

NAD(+) contacts are provided by residues 41 to 45, 90 to 91, and glutamate 130; these read DAEYD and SL. The active-site N6-AMP-lysine intermediate is the lysine 132. The NAD(+) site is built by arginine 153, glutamate 190, lysine 307, and lysine 331. The Zn(2+) site is built by cysteine 425, cysteine 428, cysteine 443, and cysteine 449. In terms of domain architecture, BRCT spans 610-691; sequence APQGVLAGKT…MHTLLEGHAR (82 aa).

The protein belongs to the NAD-dependent DNA ligase family. LigA subfamily. Mg(2+) is required as a cofactor. It depends on Mn(2+) as a cofactor.

It carries out the reaction NAD(+) + (deoxyribonucleotide)n-3'-hydroxyl + 5'-phospho-(deoxyribonucleotide)m = (deoxyribonucleotide)n+m + AMP + beta-nicotinamide D-nucleotide.. Its function is as follows. DNA ligase that catalyzes the formation of phosphodiester linkages between 5'-phosphoryl and 3'-hydroxyl groups in double-stranded DNA using NAD as a coenzyme and as the energy source for the reaction. It is essential for DNA replication and repair of damaged DNA. This Burkholderia pseudomallei (strain K96243) protein is DNA ligase.